Reading from the N-terminus, the 213-residue chain is Endoplasmic reticulum vesicle protein 25 (213 aa).

The signal sequence occupies residues 1-20 (MILRIPSLLYLFTLLTAVYA). The Lumenal segment spans residues 21-181 (VKFDLTSDRN…TNESTNQRVK (161 aa)). A GOLD domain is found at 33 to 122 (PKCIWNFASA…VRSVELDVDI (90 aa)). Residues 182–202 (VFSVLIICCTIGLGVWQLLHL) form a helical membrane-spanning segment. Over 203–213 (RSFFKRKYLID) the chain is Cytoplasmic.

This sequence belongs to the EMP24/GP25L family.

The protein resides in the endoplasmic reticulum membrane. The protein localises to the golgi apparatus membrane. Constituent of COPII-coated endoplasmic reticulum-derived transport vesicles. Required for efficient transport of a subset of secretory proteins to the Golgi. Facilitates retrograde transport from the Golgi to the endoplasmic reticulum. The chain is Endoplasmic reticulum vesicle protein 25 (ERV25) from Cryptococcus neoformans var. neoformans serotype D (strain JEC21 / ATCC MYA-565) (Filobasidiella neoformans).